The chain runs to 318 residues: Aspartate carbamoyltransferase catalytic subunit (318 aa).

Carbamoyl phosphate is bound by residues Arg67 and Thr68. Lys95 contacts L-aspartate. Carbamoyl phosphate contacts are provided by Arg117, His145, and Gln148. L-aspartate-binding residues include Arg178 and Arg236. 2 residues coordinate carbamoyl phosphate: Gly277 and Pro278.

The protein belongs to the aspartate/ornithine carbamoyltransferase superfamily. ATCase family. In terms of assembly, heterododecamer (2C3:3R2) of six catalytic PyrB chains organized as two trimers (C3), and six regulatory PyrI chains organized as three dimers (R2).

It carries out the reaction carbamoyl phosphate + L-aspartate = N-carbamoyl-L-aspartate + phosphate + H(+). It participates in pyrimidine metabolism; UMP biosynthesis via de novo pathway; (S)-dihydroorotate from bicarbonate: step 2/3. Catalyzes the condensation of carbamoyl phosphate and aspartate to form carbamoyl aspartate and inorganic phosphate, the committed step in the de novo pyrimidine nucleotide biosynthesis pathway. In Roseiflexus castenholzii (strain DSM 13941 / HLO8), this protein is Aspartate carbamoyltransferase catalytic subunit.